The sequence spans 172 residues: MMDAVRARIRDVPDFPKKGIVFKDITPVLSDPHTFREVIDAFVERWKGERVDKVIGIESRGFIFAAPIAYALGAGFTIVRKPGKLPWETIREVYALEYGEGALELHIDAIGPGDRVLVVDDVLATGGTAGAAGRLVVRQGAELLGYAFLAELSFLNGARQLGHAKVHSLLTF.

This sequence belongs to the purine/pyrimidine phosphoribosyltransferase family. In terms of assembly, homodimer.

The protein localises to the cytoplasm. The enzyme catalyses AMP + diphosphate = 5-phospho-alpha-D-ribose 1-diphosphate + adenine. It participates in purine metabolism; AMP biosynthesis via salvage pathway; AMP from adenine: step 1/1. Functionally, catalyzes a salvage reaction resulting in the formation of AMP, that is energically less costly than de novo synthesis. The polypeptide is Adenine phosphoribosyltransferase (Anaeromyxobacter dehalogenans (strain 2CP-1 / ATCC BAA-258)).